Here is a 119-residue protein sequence, read N- to C-terminus: MHELSITEELLKTIVAKAEEAKARNVSRINLVIGEYAGVVEDSVKMCFEILSQDTIANGAILEFSRIPAKFRCRLCGHTFPSGQNLLVCPECQGWNAEVIAGNEFFIESIEVDDESQSS.

Position 2 (H2) interacts with Ni(2+). Zn(2+) contacts are provided by C73, C76, C89, and C92.

The protein belongs to the HypA/HybF family.

Involved in the maturation of [NiFe] hydrogenases. Required for nickel insertion into the metal center of the hydrogenase. The chain is Hydrogenase maturation factor HypA from Dehalococcoides mccartyi (strain ATCC BAA-2100 / JCM 16839 / KCTC 5957 / BAV1).